A 1241-amino-acid chain; its full sequence is Plasma membrane calcium-transporting ATPase 4 (1241 aa).

The Cytoplasmic segment spans residues 1–92 (MTNPSDRVLP…NVIPPKKPKT (92 aa)). The residue at position 13 (Ser-13) is a Phosphoserine. A helical membrane pass occupies residues 93-113 (FLELVWEALQDVTLIILEIAA). Residues 114–150 (IISLVLSFYRPAGEENELCGQVATTPEDENEAQAGWI) lie on the Extracellular side of the membrane. Residues 151 to 171 (EGAAILFSVIIVVLVTAFNDW) traverse the membrane as a helical segment. The Cytoplasmic portion of the chain corresponds to 172-356 (SKEKQFRGLQ…KEKSVLQGKL (185 aa)). The tract at residues 294-318 (EGEKKKKGKKQGVPENRNKAKTQDG) is disordered. Ser-328 carries the phosphoserine modification. A helical transmembrane segment spans residues 357 to 376 (TRLAVQIGKAGLLMSALTVF). Residues 377–409 (ILILYFVIDNFVINRRPWLPECTPIYIQYFVKF) are Extracellular-facing. Residues 410–427 (FIIGITVLVVAVPEGLPL) traverse the membrane as a helical segment. The Cytoplasmic portion of the chain corresponds to 428–840 (AVTISLAYSV…MWGRNVYDSI (413 aa)). The 4-aspartylphosphate intermediate role is filled by Asp-465. 2 residues coordinate Mg(2+): Asp-785 and Asp-789. The helical transmembrane segment at 841–860 (SKFLQFQLTVNVVAVIVAFT) threads the bilayer. Residues 861–870 (GACITQDSPL) lie on the Extracellular side of the membrane. Residues 871-891 (KAVQMLWVNLIMDTFASLALA) form a helical membrane-spanning segment. The Cytoplasmic segment spans residues 892 to 911 (TEPPTESLLKRRPYGRNKPL). A helical membrane pass occupies residues 912-934 (ISRTMMKNILGHAFYQLIVIFIL). The Extracellular portion of the chain corresponds to 935–952 (VFAGEKFFDIDSGRKAPL). Residues 953–974 (HSPPSQHYTIVFNTFVLMQLFN) traverse the membrane as a helical segment. Residues 975–993 (EINSRKIHGEKNVFSGIYR) are Cytoplasmic-facing. The chain crosses the membrane as a helical span at residues 994-1015 (NIIFCSVVLGTFICQIFIVEFG). The Extracellular segment spans residues 1016–1025 (GKPFSCTSLS). The chain crosses the membrane as a helical span at residues 1026-1047 (LSQWLWCLFIGIGELLWGQFIS). At 1048 to 1241 (AIPTRSLKFL…SSLQSLETSV (194 aa)) the chain is on the cytoplasmic side. The segment at 1086-1103 (LRRGQILWFRGLNRIQTQ) is calmodulin-binding subdomain A. A Phosphothreonine; by PKC modification is found at Thr-1102. Positions 1104 to 1113 (IDVINTFQTG) are calmodulin-binding subdomain B.

The protein belongs to the cation transport ATPase (P-type) (TC 3.A.3) family. Type IIB subfamily. In terms of assembly, interacts with PDZD11. Interacts with SLC35G1 and STIM1. Interacts with calmodulin. In terms of tissue distribution, isoform XB is the most abundant isoform and is expressed ubiquitously. Isoforms containing segment Z have only been detected in heart, while isoforms containing segment a have been found in heart, stomach and brain cortex.

The protein resides in the cell membrane. It localises to the cell projection. The protein localises to the cilium. Its subcellular location is the flagellum membrane. It carries out the reaction Ca(2+)(in) + ATP + H2O = Ca(2+)(out) + ADP + phosphate + H(+). With respect to regulation, activated by calcium/calmodulin. Functionally, calcium/calmodulin-regulated and magnesium-dependent enzyme that catalyzes the hydrolysis of ATP coupled with the transport of calcium out of the cell. By regulating sperm cell calcium homeostasis, may play a role in sperm motility. This Homo sapiens (Human) protein is Plasma membrane calcium-transporting ATPase 4.